A 708-amino-acid polypeptide reads, in one-letter code: WD repeat-containing and planar cell polarity effector protein fritz homolog (708 aa).

2 WD repeats span residues 303 to 342 (PLRSRVISCAVNTSEDKLVLGCEDSSLILYESDCKVTLLA) and 343 to 382 (QADLLPDLIRWHPNGTIFVVASSQGELQIFDMALSPIRAQ).

Belongs to the WD repeat fritz family. In terms of assembly, interacts with sept2-a. Interacts with intu and fuz; fuz, intu and wdpcp probably form the core CPLANE (ciliogenesis and planar polarity effectors) complex.

It is found in the cell membrane. The protein resides in the cytoplasm. The protein localises to the cytoskeleton. Its subcellular location is the cilium axoneme. It localises to the cilium basal body. Its function is as follows. Probable effector of the planar cell polarity signaling pathway which regulates the septin cytoskeleton in both ciliogenesis and collective cell movements including covergent extension during gastrulation. Controls cell shape but not polarization during convergent extension. Proposed to function as core component of the CPLANE (ciliogenesis and planar polarity effectors) complex involved in the recruitment of peripheral IFT-A proteins to basal bodies. In Xenopus laevis (African clawed frog), this protein is WD repeat-containing and planar cell polarity effector protein fritz homolog (wdpcp).